Reading from the N-terminus, the 706-residue chain is Fatty acid oxidation complex subunit alpha (706 aa).

The interval 1–188 is enoyl-CoA hydratase; the sequence is MEKTFNLTRR…KMGLVNDVVP (188 aa). A 3-hydroxyacyl-CoA dehydrogenase region spans residues 308 to 706; the sequence is RKVKKAVILG…TMARENVSFF (399 aa).

The protein in the N-terminal section; belongs to the enoyl-CoA hydratase/isomerase family. It in the central section; belongs to the 3-hydroxyacyl-CoA dehydrogenase family. Heterotetramer of two alpha chains (FadJ) and two beta chains (FadI).

The protein resides in the cytoplasm. It carries out the reaction a (3S)-3-hydroxyacyl-CoA = a (2E)-enoyl-CoA + H2O. The catalysed reaction is a 4-saturated-(3S)-3-hydroxyacyl-CoA = a (3E)-enoyl-CoA + H2O. It catalyses the reaction a (3S)-3-hydroxyacyl-CoA + NAD(+) = a 3-oxoacyl-CoA + NADH + H(+). The enzyme catalyses (3S)-3-hydroxybutanoyl-CoA = (3R)-3-hydroxybutanoyl-CoA. It participates in lipid metabolism; fatty acid beta-oxidation. Its function is as follows. Catalyzes the formation of a hydroxyacyl-CoA by addition of water on enoyl-CoA. Also exhibits 3-hydroxyacyl-CoA epimerase and 3-hydroxyacyl-CoA dehydrogenase activities. The protein is Fatty acid oxidation complex subunit alpha of Shewanella sp. (strain W3-18-1).